Reading from the N-terminus, the 272-residue chain is Sulfate transporter CysZ (272 aa).

Transmembrane regions (helical) follow at residues F29 to I49, W66 to F86, I148 to L168, and F219 to W239.

This sequence belongs to the CysZ family.

The protein resides in the cell inner membrane. In terms of biological role, high affinity, high specificity proton-dependent sulfate transporter, which mediates sulfate uptake. Provides the sulfur source for the cysteine synthesis pathway. The protein is Sulfate transporter CysZ of Haemophilus influenzae (strain ATCC 51907 / DSM 11121 / KW20 / Rd).